A 393-amino-acid chain; its full sequence is Protein DDI1 homolog 2 (393 aa).

In terms of domain architecture, Ubiquitin-like spans 1-81 (MLITVYCVRR…VILRQKEAPE (81 aa)). The disordered stretch occupies residues 82 to 127 (TRPAAPFPGLDFSTIAVPGASSQPDPSQPQAPPPPPDTSSFPQGLD). Residues 107–118 (PSQPQAPPPPPD) are compositionally biased toward pro residues. Aspartate 246 is an active-site residue. The Ubiquitin-binding signature appears at 370–389 (EEIADRELAEVLQKSADEAD).

The protein belongs to the DDI1 family. As to quaternary structure, homodimer.

The protein localises to the cytoplasm. Its subcellular location is the cytosol. It is found in the chromosome. Aspartic protease that mediates the cleavage of NFE2L1/NRF1 at 'Leu-104', thereby promoting release of NFE2L1/NRF1 from the endoplasmic reticulum membrane. Ubiquitination of NFE2L1/NRF1 is a prerequisite for cleavage, suggesting that DDI2 specifically recognizes and binds ubiquitinated NFE2L1/NRF1. Seems to act as a proteasomal shuttle which links the proteasome and replication fork proteins like RTF2. Required for cellular survival following replication stress. This is Protein DDI1 homolog 2 (ddi2) from Xenopus laevis (African clawed frog).